Consider the following 448-residue polypeptide: Phosphoglucosamine mutase (448 aa).

The active-site Phosphoserine intermediate is serine 108. Mg(2+) is bound by residues serine 108, aspartate 247, aspartate 249, and aspartate 251. Serine 108 bears the Phosphoserine mark.

The protein belongs to the phosphohexose mutase family. Requires Mg(2+) as cofactor. Post-translationally, activated by phosphorylation.

The enzyme catalyses alpha-D-glucosamine 1-phosphate = D-glucosamine 6-phosphate. Functionally, catalyzes the conversion of glucosamine-6-phosphate to glucosamine-1-phosphate. This chain is Phosphoglucosamine mutase, found in Herminiimonas arsenicoxydans.